We begin with the raw amino-acid sequence, 303 residues long: uncharacterized protein (303 aa).

This is an uncharacterized protein from Bacillus subtilis (strain 168).